Reading from the N-terminus, the 652-residue chain is Acetyl-coenzyme A synthetase (652 aa).

CoA contacts are provided by residues 191 to 194, T311, and N335; that span reads RAGR. Residues 387 to 389, 411 to 416, D500, and R515 each bind ATP; these read GEP and DTWWQT. Residue S523 participates in CoA binding. Residue R526 coordinates ATP. Positions 537, 539, and 542 each coordinate Mg(2+). R584 is a binding site for CoA. An N6-acetyllysine; by autocatalysis modification is found at K609.

Belongs to the ATP-dependent AMP-binding enzyme family. Forms a 1:1 complex with CobB/NAD-dependent deacetylase. Requires Mg(2+) as cofactor. Post-translationally, autoacetylated. Deacetylation by CobB activates the enzyme.

It carries out the reaction acetate + ATP + CoA = acetyl-CoA + AMP + diphosphate. Its function is as follows. Catalyzes the conversion of acetate into acetyl-CoA (AcCoA), an essential intermediate at the junction of anabolic and catabolic pathways. Acs undergoes a two-step reaction. In the first half reaction, Acs combines acetate with ATP to form acetyl-adenylate (AcAMP) intermediate. In the second half reaction, it can then transfer the acetyl group from AcAMP to the sulfhydryl group of CoA, forming the product AcCoA. Functionally, enables the cell to use acetate during aerobic growth to generate energy via the TCA cycle, and biosynthetic compounds via the glyoxylate shunt. Acetylates CheY, the response regulator involved in flagellar movement and chemotaxis. In Escherichia coli (strain K12), this protein is Acetyl-coenzyme A synthetase.